Here is a 1315-residue protein sequence, read N- to C-terminus: MSTVLVRRKERRQPPQMPRGEILLESPPELPEVVTNSFQNVLMYLPMAAGSAAMVFTFLNHRNTLQLVAGGMFALSMFGMMFGQLSQQSGERKTKLNSARRDYLRYLGQVRQRVRKAAKQQREALEWNNPAPGRLWSMVMSPRLWERRSSDADFAQVRIGAGPQRLAVQLIPPETKPVEDLEPMSAGALRRFLRAHSTVPDLPVAISLRSFARILPDGDPKAVYGMVRALIMQLAAFHSPDDVRITVCASRERMPQWQWMKWLPHSLHPTEYDAAGQVRLLTHSLVELESMLGPEIKDRGMFGASRAPAEPFHLVIVDGGQASYDSQIASDGIDGVCVIDLTGSVAETNEATMLRLRVTPERVYVVKRDRAGKEVLSSVGRPDQASIAEAEALARQLAPFRTSAADEPEEDVLSANMTLTSLLHIDNPYNLDPAVLWRPRPQRNRLRVPIGLDADGRPLELDIKESAQGGMGPHGLCIGATGSGKSELLRTLVLALAMTHSPEVLNFVLVDFKGGATFLGMEGLRHVSAIITNLEEELPLVDRMYDALHGEMVRRQEHLRHSGNYASLRDYEKARMEGAPLPPMPTLFIVLDEFSELLSAKPDFAELFVMIGRLGRSLGVHLLLASQRLEEGKLRGLDTHLSYRIGLRTFSAMESRVVLGVPDAYELPPSPGNGYLKFATEPLVRFKAAYVSGPVDEEPQTRSEGPQIVRQVLPYLTDYIRPQVVEQPQPEQRAEENKSSESLFDVVVRQLAGHGPEPHQIWLPPLDVPPTLDELLPPLSPSAAHGYTADGWEWRGRLHAVVGLVDRPFDQRRDPYWLDLSGGAGHVGVAGGPQTGKSTMLRTLITSLALLHTPQEVQFYCLDFGGGTLAGLAELPHVGSVATRLDADRIRRTVAEVSALLEQREQEFTERGIDSMATYRRLRATGEYAGDGFGDVFLVVDNWLTLRQDYEALEDSITQLAARGLGYGIHVVLSSNKWSEFRTSIRDLLGTKLELRLGDPYESEVDRKKAANVPENRPGRGLTRDGYHFLTALPRIDGDTSAETLTEGIATTVKTIREAWHGPTAPPVRMLPNVLPAAQLPSAAESGTRIPIGIDEDSLSPVYLDFNTDPHFLVFGDTECGKSNLLRLITAGIIERYTPQQARLIFIDYSRSLLDVATTEHQIGYAASSTAASSLVRDIKGAMEARLPPPDLTPEQLRSRSWWTGAELFLVVDDYEMVATSDNPLRPLAELLPQARDIGLHLIIARSMGGAGRALYEPIIQRIKEMASPGLVMSGNKDEGILLGNVKPHKLPQGRGYFVERRSGTRLIQTAYRES.

Basic residues predominate over residues 1 to 11; sequence MSTVLVRRKER. The disordered stretch occupies residues 1–21; the sequence is MSTVLVRRKERRQPPQMPRGE. Residues 1-40 are Cytoplasmic-facing; the sequence is MSTVLVRRKERRQPPQMPRGEILLESPPELPEVVTNSFQN. Residues 41–61 form a helical membrane-spanning segment; it reads VLMYLPMAAGSAAMVFTFLNH. Residues 62–64 lie on the Extracellular side of the membrane; the sequence is RNT. Residues 65–85 form a helical membrane-spanning segment; sequence LQLVAGGMFALSMFGMMFGQL. Residues 86–1315 are Cytoplasmic-facing; the sequence is SQQSGERKTK…RLIQTAYRES (1230 aa). 2 FtsK domains span residues 456-656 and 813-1004; these read GRPL…MESR and RDPY…YESE. 479 to 486 contributes to the ATP binding site; it reads GATGSGKS. E593 is an active-site residue. The segment at 721 to 1315 is binds EsxB; that stretch reads RPQVVEQPQP…RLIQTAYRES (595 aa). ATP is bound by residues 834-839, T1031, 1119-1124, Q1293, and 1310-1311; these read QTGKST, ECGKSN, and TA. Residues 1099–1282 form the FtsK 3 domain; the sequence is LSPVYLDFNT…MSGNKDEGIL (184 aa).

As to quaternary structure, the cytosolic domain can form homodimers. Binds EsxB, which leads to multimerization, however EsxA disassembles the multimers, possibly by making EccC-EsxA-EsxB trimers instead of EccC-EsxB-EsxB-EccC tetramers. Forms a complex with EsxA and EsxB, probably wholly mediated by EsxB.

It is found in the cell membrane. Its activity is regulated as follows. EsxB binding to the third FtsK domain causes multimerization; a subsequent unknown step relieves the allosteric inhibition of linker 2 on FtsK domain 1, activating the ATPase activity; a mutant EsxB ('Ala-98') does not cause multimers to form. Part of the ESX specialized secretion system, which exports proteins from the cell including EsxA (ESAT-6) and EsxB (CFP-10). Has weak intrinsic ATPase activity; probably only the first FtsK domain can hydrolyze ATP. Might be the translocase subunit. This Thermomonospora curvata (strain ATCC 19995 / DSM 43183 / JCM 3096 / KCTC 9072 / NBRC 15933 / NCIMB 10081 / Henssen B9) protein is ESX secretion system protein EccC.